Reading from the N-terminus, the 94-residue chain is ESAT-6-like protein EsxL (94 aa).

It belongs to the WXG100 family. ESAT-6 subfamily. Strongly interacts with EsxK to form a heterodimeric complex under reducing conditions. The complex is regulated by the redox state of EsxL.

It localises to the secreted. Functionally, induces apoptosis of host cells. Is immunogenic with highly specific seroreactivity towards TB patients' serum. The polypeptide is ESAT-6-like protein EsxL (Mycobacterium tuberculosis (strain ATCC 25618 / H37Rv)).